Consider the following 197-residue polypeptide: Recombination protein RecR (197 aa).

A C4-type zinc finger spans residues 57–72 (CSVCFGITEEDPCRLC). One can recognise a Toprim domain in the interval 79-174 (TSLCVVEEPQ…RVTRLAHGIP (96 aa)).

This sequence belongs to the RecR family.

May play a role in DNA repair. It seems to be involved in an RecBC-independent recombinational process of DNA repair. It may act with RecF and RecO. The chain is Recombination protein RecR from Geobacter metallireducens (strain ATCC 53774 / DSM 7210 / GS-15).